The primary structure comprises 286 residues: D-tagatose-1,6-bisphosphate aldolase subunit KbaY (286 aa).

The active-site Proton donor is the D82. 2 residues coordinate Zn(2+): H83 and H180. G181 contacts dihydroxyacetone phosphate. H208 contacts Zn(2+). Residues G209 to S211 and N230 to T233 contribute to the dihydroxyacetone phosphate site.

This sequence belongs to the class II fructose-bisphosphate aldolase family. TagBP aldolase KbaY subfamily. In terms of assembly, homotetramer. Forms a complex with KbaZ. Requires Zn(2+) as cofactor.

It catalyses the reaction D-tagatofuranose 1,6-bisphosphate = D-glyceraldehyde 3-phosphate + dihydroxyacetone phosphate. The protein operates within carbohydrate metabolism; D-tagatose 6-phosphate degradation; D-glyceraldehyde 3-phosphate and glycerone phosphate from D-tagatose 6-phosphate: step 2/2. Catalytic subunit of the tagatose-1,6-bisphosphate aldolase KbaYZ, which catalyzes the reversible aldol condensation of dihydroxyacetone phosphate (DHAP or glycerone-phosphate) with glyceraldehyde 3-phosphate (G3P) to produce tagatose 1,6-bisphosphate (TBP). Requires KbaZ subunit for full activity and stability. The polypeptide is D-tagatose-1,6-bisphosphate aldolase subunit KbaY (Escherichia coli O7:K1 (strain IAI39 / ExPEC)).